The primary structure comprises 267 residues: Cyclin-C (267 aa).

Positions 48-151 (IQVLGEQLKL…LLENLDCCLI (104 aa)) constitute a Cyclin N-terminal domain.

Belongs to the cyclin family. Cyclin C subfamily. In terms of assembly, component of the Cdk8 module of the Mediator complex.

The protein resides in the nucleus. In terms of biological role, component of the Mediator complex, a coactivator involved in regulated gene transcription of nearly all RNA polymerase II-dependent genes. Mediator functions as a bridge to convey information from gene-specific regulatory proteins to the basal RNA polymerase II transcription machinery. Mediator is recruited to promoters by direct interactions with regulatory proteins and serves as a scaffold for the assembly of a functional preinitiation complex with RNA polymerase II and the general transcription factors. Binds to and activates cyclin-dependent kinase Cdk8 that phosphorylates the CTD (C-terminal domain) of the large subunit of RNA polymerase II (RNAp II), which may inhibit the formation of a transcription initiation complex. In Drosophila pseudoobscura pseudoobscura (Fruit fly), this protein is Cyclin-C (CycC).